Consider the following 518-residue polypeptide: Glutamate--cysteine ligase (518 aa).

The protein belongs to the glutamate--cysteine ligase type 1 family. Type 1 subfamily.

It carries out the reaction L-cysteine + L-glutamate + ATP = gamma-L-glutamyl-L-cysteine + ADP + phosphate + H(+). Its pathway is sulfur metabolism; glutathione biosynthesis; glutathione from L-cysteine and L-glutamate: step 1/2. This Escherichia coli O157:H7 protein is Glutamate--cysteine ligase.